The primary structure comprises 385 residues: DnaJ homolog subfamily C member 28 (385 aa).

Residues 48-132 form the J domain; that stretch reads EYYRLLNLDE…EGKFKYNTPQ (85 aa). The stretch at 261 to 318 forms a coiled coil; that stretch reads KEIKDTIEQLREALLMSRKKLGNPLSPTEQKQWAQVCEQFQEKIRKLNKRINDFNLIV.

Functionally, may have a role in protein folding or as a chaperone. This is DnaJ homolog subfamily C member 28 (Dnajc28) from Mus musculus (Mouse).